The sequence spans 147 residues: Globin (147 aa).

Residues 1–147 (GLSAEQKTAL…LLGVLIENHQ (147 aa)) form the Globin domain. 2 residues coordinate heme b: H66 and H98.

The protein belongs to the globin family. As to quaternary structure, homodimer.

The polypeptide is Globin (Tritia mutabilis (Sea snail)).